The following is a 495-amino-acid chain: 3-octaprenyl-4-hydroxybenzoate carboxy-lyase (495 aa).

Residue N172 coordinates Mn(2+). Prenylated FMN is bound by residues I175–R177, R189–L191, and R194–G195. E238 is a Mn(2+) binding site. D287 (proton donor) is an active-site residue.

Belongs to the UbiD family. Homohexamer. The cofactor is prenylated FMN. Mn(2+) serves as cofactor.

Its subcellular location is the cell membrane. It carries out the reaction a 4-hydroxy-3-(all-trans-polyprenyl)benzoate + H(+) = a 2-(all-trans-polyprenyl)phenol + CO2. Its pathway is cofactor biosynthesis; ubiquinone biosynthesis. Functionally, catalyzes the decarboxylation of 3-octaprenyl-4-hydroxy benzoate to 2-octaprenylphenol, an intermediate step in ubiquinone biosynthesis. The protein is 3-octaprenyl-4-hydroxybenzoate carboxy-lyase of Yersinia pseudotuberculosis serotype O:1b (strain IP 31758).